We begin with the raw amino-acid sequence, 211 residues long: Germin-like protein subfamily 3 member 3 (211 aa).

Positions 1-20 are cleaved as a signal peptide; the sequence is MKMIIQIFFIISLISTISFA. The cysteines at positions 26 and 41 are disulfide-linked. In terms of domain architecture, Cupin type-1 spans 55-201; sequence TGLGTAGNTS…TTFLSDAEVK (147 aa). A glycan (N-linked (GlcNAc...) asparagine) is linked at N62. Residues H103, H105, and E110 each coordinate Mn(2+). Residue S140 is modified to Phosphoserine. Residue H149 coordinates Mn(2+).

Belongs to the germin family. As to quaternary structure, oligomer (believed to be a pentamer but probably hexamer). Expressed in leaves and flowers.

Its subcellular location is the secreted. It is found in the extracellular space. The protein resides in the apoplast. In terms of biological role, may play a role in plant defense. Probably has no oxalate oxidase activity even if the active site is conserved. The sequence is that of Germin-like protein subfamily 3 member 3 (GER3) from Arabidopsis thaliana (Mouse-ear cress).